We begin with the raw amino-acid sequence, 297 residues long: Phosphoribosylaminoimidazole-succinocarboxamide synthase (297 aa).

It belongs to the SAICAR synthetase family.

The enzyme catalyses 5-amino-1-(5-phospho-D-ribosyl)imidazole-4-carboxylate + L-aspartate + ATP = (2S)-2-[5-amino-1-(5-phospho-beta-D-ribosyl)imidazole-4-carboxamido]succinate + ADP + phosphate + 2 H(+). The protein operates within purine metabolism; IMP biosynthesis via de novo pathway; 5-amino-1-(5-phospho-D-ribosyl)imidazole-4-carboxamide from 5-amino-1-(5-phospho-D-ribosyl)imidazole-4-carboxylate: step 1/2. This Methylobacillus flagellatus (strain ATCC 51484 / DSM 6875 / VKM B-1610 / KT) protein is Phosphoribosylaminoimidazole-succinocarboxamide synthase.